The sequence spans 314 residues: Ribosomal protein uL3 glutamine methyltransferase (314 aa).

This sequence belongs to the protein N5-glutamine methyltransferase family. PrmB subfamily.

It catalyses the reaction L-glutaminyl-[ribosomal protein uL3] + S-adenosyl-L-methionine = N(5)-methyl-L-glutaminyl-[ribosomal protein uL3] + S-adenosyl-L-homocysteine + H(+). Functionally, methylates large ribosomal subunit protein uL3 on a specific glutamine residue. This Vibrio cholerae serotype O1 (strain ATCC 39315 / El Tor Inaba N16961) protein is Ribosomal protein uL3 glutamine methyltransferase.